We begin with the raw amino-acid sequence, 582 residues long: Hemagglutinin-neuraminidase (582 aa).

Residues Met-1–Arg-34 lie on the Intravirion side of the membrane. A helical transmembrane segment spans residues Ile-35–Leu-55. At Val-56–Thr-582 the chain is on the virion surface side. 3 disulfides stabilise this stretch: Cys-178–Cys-202, Cys-192–Cys-253, and Cys-244–Cys-257. Residues Asn-284 and Asn-329 are each glycosylated (N-linked (GlcNAc...) asparagine; by host). Cystine bridges form between Cys-350/Cys-471, Cys-382/Cys-392, and Cys-465/Cys-475. Residues Asn-400 and Asn-448 are each glycosylated (N-linked (GlcNAc...) asparagine; by host). An N-linked (GlcNAc...) asparagine; by host glycan is attached at Asn-507. A disulfide bond links Cys-545 and Cys-556.

This sequence belongs to the paramyxoviruses hemagglutinin-neuraminidase family. In terms of assembly, homotetramer; composed of disulfide-linked homodimers. Interacts with F protein trimer.

Its subcellular location is the virion membrane. It is found in the host cell membrane. It catalyses the reaction Hydrolysis of alpha-(2-&gt;3)-, alpha-(2-&gt;6)-, alpha-(2-&gt;8)- glycosidic linkages of terminal sialic acid residues in oligosaccharides, glycoproteins, glycolipids, colominic acid and synthetic substrates.. Its function is as follows. Attaches the virus to alpha-2,3-linked sialic acid-containing cell receptors and thereby initiating infection. Binding of HN protein to the receptor induces a conformational change that allows the F protein to trigger virion/cell membranes fusion. Binds to the glycan motifs sialyl Lewis (SLe) and GM2 ganglioside (GM2-glycan). Neuraminidase activity ensures the efficient spread of the virus by dissociating the mature virions from the neuraminic acid containing glycoproteins. The chain is Hemagglutinin-neuraminidase from Mumps orthorubulavirus (MuV).